Reading from the N-terminus, the 312-residue chain is 4-hydroxy-3-methylbut-2-enyl diphosphate reductase (312 aa).

Cys15 serves as a coordination point for [4Fe-4S] cluster. Positions 44 and 77 each coordinate (2E)-4-hydroxy-3-methylbut-2-enyl diphosphate. The dimethylallyl diphosphate site is built by His44 and His77. 2 residues coordinate isopentenyl diphosphate: His44 and His77. Residue Cys99 coordinates [4Fe-4S] cluster. Residue His127 participates in (2E)-4-hydroxy-3-methylbut-2-enyl diphosphate binding. His127 serves as a coordination point for dimethylallyl diphosphate. His127 contacts isopentenyl diphosphate. The Proton donor role is filled by Glu129. (2E)-4-hydroxy-3-methylbut-2-enyl diphosphate is bound at residue Thr167. Cys197 contacts [4Fe-4S] cluster. (2E)-4-hydroxy-3-methylbut-2-enyl diphosphate-binding residues include Ser225, Ser226, Asn227, and Ser269. Residues Ser225, Ser226, Asn227, and Ser269 each contribute to the dimethylallyl diphosphate site. Isopentenyl diphosphate-binding residues include Ser225, Ser226, Asn227, and Ser269.

The protein belongs to the IspH family. Requires [4Fe-4S] cluster as cofactor.

The catalysed reaction is isopentenyl diphosphate + 2 oxidized [2Fe-2S]-[ferredoxin] + H2O = (2E)-4-hydroxy-3-methylbut-2-enyl diphosphate + 2 reduced [2Fe-2S]-[ferredoxin] + 2 H(+). It carries out the reaction dimethylallyl diphosphate + 2 oxidized [2Fe-2S]-[ferredoxin] + H2O = (2E)-4-hydroxy-3-methylbut-2-enyl diphosphate + 2 reduced [2Fe-2S]-[ferredoxin] + 2 H(+). It functions in the pathway isoprenoid biosynthesis; dimethylallyl diphosphate biosynthesis; dimethylallyl diphosphate from (2E)-4-hydroxy-3-methylbutenyl diphosphate: step 1/1. It participates in isoprenoid biosynthesis; isopentenyl diphosphate biosynthesis via DXP pathway; isopentenyl diphosphate from 1-deoxy-D-xylulose 5-phosphate: step 6/6. In terms of biological role, catalyzes the conversion of 1-hydroxy-2-methyl-2-(E)-butenyl 4-diphosphate (HMBPP) into a mixture of isopentenyl diphosphate (IPP) and dimethylallyl diphosphate (DMAPP). Acts in the terminal step of the DOXP/MEP pathway for isoprenoid precursor biosynthesis. The sequence is that of 4-hydroxy-3-methylbut-2-enyl diphosphate reductase from Azoarcus sp. (strain BH72).